The primary structure comprises 79 residues: Putative defensin-like protein 146 (79 aa).

A signal peptide spans 1–25 (MMKNQFQLSLIILTFFILLELGVMG). 4 disulfide bridges follow: Cys35/Cys78, Cys46/Cys66, Cys51/Cys72, and Cys55/Cys74.

This sequence belongs to the DEFL family.

The protein resides in the secreted. The protein is Putative defensin-like protein 146 (LCR9) of Arabidopsis thaliana (Mouse-ear cress).